The following is a 342-amino-acid chain: Phosphatidate cytidylyltransferase, mitochondrial (342 aa).

It belongs to the TAM41 family. The cofactor is Mg(2+). Requires Co(2+) as cofactor. Cu(2+) is required as a cofactor.

It localises to the mitochondrion inner membrane. The catalysed reaction is a 1,2-diacyl-sn-glycero-3-phosphate + CTP + H(+) = a CDP-1,2-diacyl-sn-glycerol + diphosphate. The protein operates within phospholipid metabolism; CDP-diacylglycerol biosynthesis; CDP-diacylglycerol from sn-glycerol 3-phosphate: step 3/3. In terms of biological role, catalyzes the formation of CDP-diacylglycerol (CDP-DAG) from phosphatidic acid (PA) in the mitochondrial inner membrane. Required for the biosynthesis of the dimeric phospholipid cardiolipin, which stabilizes supercomplexes of the mitochondrial respiratory chain in the mitochondrial inner membrane. The chain is Phosphatidate cytidylyltransferase, mitochondrial from Drosophila melanogaster (Fruit fly).